The following is a 317-amino-acid chain: uncharacterized protein (317 aa).

Low complexity predominate over residues 68-78; it reads DSTNTDISNET. Residues 68-87 are disordered; it reads DSTNTDISNETPILSNNTPI.

This is an uncharacterized protein from Methanocaldococcus jannaschii (strain ATCC 43067 / DSM 2661 / JAL-1 / JCM 10045 / NBRC 100440) (Methanococcus jannaschii).